A 350-amino-acid chain; its full sequence is Glyoxylate reductase 1 (350 aa).

Position 31 is a phosphothreonine (Thr-31). NAD(+) contacts are provided by residues 173–174, 252–254, and Asp-278; these read RI and TAR. Arg-254 is a catalytic residue. The active site involves Glu-283. The active-site Proton donor is the His-301. An NAD(+)-binding site is contributed by 301–304; sequence HMGT.

It belongs to the D-isomer specific 2-hydroxyacid dehydrogenase family.

The protein localises to the cytoplasm. Its subcellular location is the nucleus. The protein resides in the mitochondrion. The catalysed reaction is glycolate + NAD(+) = glyoxylate + NADH + H(+). It catalyses the reaction glycolate + NADP(+) = glyoxylate + NADPH + H(+). The enzyme catalyses (R)-glycerate + NAD(+) = 3-hydroxypyruvate + NADH + H(+). It carries out the reaction (R)-glycerate + NADP(+) = 3-hydroxypyruvate + NADPH + H(+). Its function is as follows. Glyoxylate reductase that reversibly reduces glyoxylate to glycolate, or alternatively hydroxypyruvate to D-glycerate, using either NADPH or NADH as a cosubstrate. Does not act as a hydroxyisocaproate dehydrogenase even though it also has minor activity on alpha-ketoisocaproate. This Saccharomyces cerevisiae (strain ATCC 204508 / S288c) (Baker's yeast) protein is Glyoxylate reductase 1.